The following is a 354-amino-acid chain: Methylthioribose-1-phosphate isomerase (354 aa).

Substrate contacts are provided by residues 54 to 56 (RGA), arginine 97, and glutamine 204. Aspartate 245 functions as the Proton donor in the catalytic mechanism. Residue 255 to 256 (NK) coordinates substrate.

Belongs to the eIF-2B alpha/beta/delta subunits family. MtnA subfamily.

It catalyses the reaction 5-(methylsulfanyl)-alpha-D-ribose 1-phosphate = 5-(methylsulfanyl)-D-ribulose 1-phosphate. Its pathway is amino-acid biosynthesis; L-methionine biosynthesis via salvage pathway; L-methionine from S-methyl-5-thio-alpha-D-ribose 1-phosphate: step 1/6. Its function is as follows. Catalyzes the interconversion of methylthioribose-1-phosphate (MTR-1-P) into methylthioribulose-1-phosphate (MTRu-1-P). In Albidiferax ferrireducens (strain ATCC BAA-621 / DSM 15236 / T118) (Rhodoferax ferrireducens), this protein is Methylthioribose-1-phosphate isomerase.